The following is a 123-amino-acid chain: Large ribosomal subunit protein uL29 (123 aa).

This sequence belongs to the universal ribosomal protein uL29 family.

The protein is Large ribosomal subunit protein uL29 (RPL35) of Euphorbia esula (Leafy spurge).